The chain runs to 472 residues: Acyltransferase PapA3 (472 aa).

This sequence belongs to the PapA acyltransferase family.

It catalyses the reaction a long-chain fatty acyl-CoA + alpha,alpha-trehalose = a 2-O-(long-chain fatty acyl)-alpha,alpha-trehalose + CoA. The catalysed reaction is a mycolipenoyl-CoA + a 2-O-(long-chain fatty acyl)-alpha,alpha-trehalose = a 2-O-(long-chain fatty acyl)-3-O-mycolipenoyl-trehalose + CoA. It carries out the reaction alpha,alpha-trehalose + hexadecanoyl-CoA = 2-O-hexadecanoyl-alpha,alpha-trehalose + CoA. The enzyme catalyses 2-O-hexadecanoyl-alpha,alpha-trehalose + hexadecanoyl-CoA = 2-O,3-O-dihexadecanoyl-alpha,alpha-trehalose + CoA. Functionally, involved in the biosynthesis of polyacyltrehalose (PAT), a pentaacylated, trehalose-based glycolipid that could have a role in anchoring the bacterial capsule. Catalyzes the sequential transfer of two palmitoyl groups onto a single glucose residue of trehalose generating the diacylated product 2,3-diacyltrehalose (trehalose dipalmitate). This Mycobacterium tuberculosis (strain CDC 1551 / Oshkosh) protein is Acyltransferase PapA3 (papA3).